The chain runs to 445 residues: MKKKIGLYWFTFDLRLHDNSLLVDASSFLDELVCLYCRPSVTPFLHHFAQEVTLGRARQKFIDASLCELNDALGQLGQRLWTLDLPPYQALKYAIQYLSVTHLYSDAMAGSDEQSILHKLQDEYPHLVIVQHSVRSLFDESKLPFTLPDLPETFTQFRKCVEGIDIAHPIDAPSRLPPMPKGAQLPTLSSFYFDESALFSGGEWSGLAHCRRYFFSGLASSYKETRNGLDGMAYSTKFSPWLALGCVSPRMIHAMLKQYEQTQGANDSTYWIYFELLWREYFYWYARCYQQRLFRFGGIRNQPPLTSFYAHRFQQWKNGTTPYPIVNACMHQLNHTGYMSNRGRQLVASCLVHELGLDWRYGAAYFETQLIDYDVGSNWGNWQYLAGVGADPRGSRQFNLEKQTQMYDPNHEFIERWQGRDSRAQQDVVDMVGWPITTQQENGDK.

In terms of domain architecture, Photolyase/cryptochrome alpha/beta spans 4 to 137 (KIGLYWFTFD…VIVQHSVRSL (134 aa)).

It belongs to the DNA photolyase class-1 family. Requires FAD as cofactor. (6R)-5,10-methylene-5,6,7,8-tetrahydrofolate is required as a cofactor.

May have a photoreceptor function. Binds DNA; probably functions as a transcriptional repressor. The protein is Cryptochrome DASH (cry) of Vibrio parahaemolyticus serotype O3:K6 (strain RIMD 2210633).